Reading from the N-terminus, the 272-residue chain is Bifunctional protein FolD (272 aa).

NADP(+)-binding positions include 155 to 157 (GRS), serine 182, and isoleucine 223.

The protein belongs to the tetrahydrofolate dehydrogenase/cyclohydrolase family. Homodimer.

It catalyses the reaction (6R)-5,10-methylene-5,6,7,8-tetrahydrofolate + NADP(+) = (6R)-5,10-methenyltetrahydrofolate + NADPH. It carries out the reaction (6R)-5,10-methenyltetrahydrofolate + H2O = (6R)-10-formyltetrahydrofolate + H(+). The protein operates within one-carbon metabolism; tetrahydrofolate interconversion. Catalyzes the oxidation of 5,10-methylenetetrahydrofolate to 5,10-methenyltetrahydrofolate and then the hydrolysis of 5,10-methenyltetrahydrofolate to 10-formyltetrahydrofolate. The polypeptide is Bifunctional protein FolD (Fervidobacterium nodosum (strain ATCC 35602 / DSM 5306 / Rt17-B1)).